We begin with the raw amino-acid sequence, 1005 residues long: DNA-directed RNA polymerase subunit beta (1005 aa).

It belongs to the RNA polymerase beta chain family. In plastids the minimal PEP RNA polymerase catalytic core is composed of four subunits: alpha, beta, beta', and beta''. When a (nuclear-encoded) sigma factor is associated with the core the holoenzyme is formed, which can initiate transcription (Potential).

It is found in the plastid. The protein resides in the apicoplast. The catalysed reaction is RNA(n) + a ribonucleoside 5'-triphosphate = RNA(n+1) + diphosphate. Functionally, DNA-dependent RNA polymerase catalyzes the transcription of DNA into RNA using the four ribonucleoside triphosphates as substrates. In Theileria parva (East coast fever infection agent), this protein is DNA-directed RNA polymerase subunit beta (rpoB).